The sequence spans 536 residues: Caspase recruitment domain-containing protein 9 (536 aa).

A Phosphoserine modification is found at serine 2. Residues aspartate 3, cysteine 10, and histidine 73 each coordinate Zn(2+). A CARD domain is found at 6-98; it reads NDDECWSALE…QLYRKVTGKE (93 aa). Residues 99–116 are linker; it reads PARVFSMIIDASGESGLT. Coiled coils occupy residues 117–277 and 303–420; these read QLLM…HRNS and SLRK…QLDM. A Glycyl lysine isopeptide (Lys-Gly) (interchain with G-Cter in ubiquitin) cross-link involves residue lysine 125. Threonine 231 bears the Phosphothreonine mark. Serine 277 is subject to Phosphoserine. Residues serine 424, serine 425, serine 431, serine 451, serine 461, serine 483, and serine 498 each carry the phosphoserine modification. Residues 425–451 form a disordered region; the sequence is SDLEDSSPRNSQELSLPQDLEEDAQLS. The segment at 472–536 is disordered; it reads KHLSQTHDTV…GSDNTDTEGS (65 aa). The span at 487–502 shows a compositional bias: basic and acidic residues; sequence PPEKERRRLKESFENY. Phosphothreonine; by CK2 is present on residues threonine 531 and threonine 533.

In terms of assembly, monomer. Homodimer; homodimerization is mediated by the CARD domain which forms an extensive interaction with the adjacent linker and coiled-coil regions; leads to an autoinhibited state. Homomultimer; polymerizes following activation, forming a nucleating helical template that seeds BCL10-filament formation via a CARD-CARD interaction. Interacts (via CARD domain) with BCL10 (via CARD domain); interaction takes place following CARD9 activation and polymerization, leading to the formation of a filamentous CBM complex assembly. Component of a CBM complex (CARD9-BCL10, MALT1), composed of CARD9, BCL10 and MALT1. Interacts with RASGRF1. Interacts with NOD2 (via NACHT domain); interaction is direct. Interacts with RIPK2. Interacts with VHL; without leading to protein degradation. Phosphorylated at Thr-231 by PRKCD downstream of C-type lectin receptors activation: phosphorylation promotes interaction with BCL10, followed by activation of NF-kappa-B and MAP kinase p38 pathways. Phosphorylated at Thr-531 and Thr-533 by CK2 following interaction with VHL, leading to inhibit the ability to activate NF-kappa-B. In terms of processing, ubiquitinated at Lys-125 via 'Lys-27'-linked ubiquitin by TRIM62 downstream of C-type lectin receptors activation; leading to CARD9 activation, followed by activation of NF-kappa-B and MAP kinase p38 pathways. Deubiquitinated at Lys-125 by USP15, inhibiting CARD9.

Its subcellular location is the cytoplasm. Maintained in an autoinhibited state via homodimerization in which the CARD domain forms an extensive interaction with the adjacent linker and coiled-coil regions. Activation downstream of C-type lectin receptors, by phosphorylation by PRKCD and/or ubiquitination by TRIM62, triggers disruption of the CARD domain-coiled coil interface, CARD9 homooligomerization and BCL10 recruitment, followed by activation of NF-kappa-B and MAP kinase p38 pathways. Zinc-binding inhibits activation by stabilizing the CARD ground-state conformation and restricting its capacity to form BCL10-nucleating filaments. Adapter protein that plays a key role in innate immune response against fungi by forming signaling complexes downstream of C-type lectin receptors. CARD9-mediated signals are essential for antifungal immunity against a subset of fungi from the phylum Ascomycota. Transduces signals in myeloid cells downstream of C-type lectin receptors CLEC7A (dectin-1), CLEC6A (dectin-2) and CLEC4E (Mincle), which detect pathogen-associated molecular pattern metabolites (PAMPs), such as fungal carbohydrates, and trigger CARD9 activation. Upon activation, CARD9 homooligomerizes to form a nucleating helical template that recruits BCL10 via CARD-CARD interaction, thereby promoting polymerization of BCL10 and subsequent recruitment of MALT1: this leads to activation of NF-kappa-B and MAP kinase p38 (MAPK11, MAPK12, MAPK13 and/or MAPK14) pathways which stimulate expression of genes encoding pro-inflammatory cytokines and chemokines. CARD9 signaling in antigen-presenting cells links innate sensing of fungi to the activation of adaptive immunity and provides a cytokine milieu that induces the development and subsequent of interleukin 17-producing T helper (Th17) cells. Also involved in activation of myeloid cells via classical ITAM-associated receptors and TLR: required for TLR-mediated activation of MAPK, while it is not required for TLR-induced activation of NF-kappa-B. CARD9 can also be engaged independently of BCL10: forms a complex with RASGRF1 downstream of C-type lectin receptors, which recruits and activates HRAS, leading to ERK activation and the production of cytokines. Acts as an important regulator of the intestinal commensal fungi (mycobiota) component of the gut microbiota. Plays an essential role in antifungal immunity against dissemination of gut fungi: acts by promoting induction of antifungal IgG antibodies response in CX3CR1(+) macrophages to confer protection against disseminated C.albicans or C.auris infection. Also mediates immunity against other pathogens, such as certain bacteria, viruses and parasites; CARD9 signaling is however redundant with other innate immune responses. In response to L.monocytogenes infection, required for the production of inflammatory cytokines activated by intracellular peptidoglycan: acts by connecting NOD2 recognition of peptidoglycan to downstream activation of MAP kinases (MAPK) without activating NF-kappa-B. In Rattus norvegicus (Rat), this protein is Caspase recruitment domain-containing protein 9.